Consider the following 333-residue polypeptide: Electron transfer flavoprotein subunit alpha, mitochondrial (333 aa).

Residues 1–19 constitute a mitochondrion transit peptide; that stretch reads MFRAAAPGQLRRAASSLRF. The tract at residues 20–204 is domain I; that stretch reads QSTLVIAEHA…EISEWLDQKL (185 aa). Position 59 is an N6-acetyllysine; alternate (K59). N6-succinyllysine; alternate is present on K59. K62 bears the N6-acetyllysine mark. K69 bears the N6-acetyllysine; alternate mark. The residue at position 69 (K69) is an N6-succinyllysine; alternate. At K75 the chain carries N6-acetyllysine. T93 is subject to Phosphothreonine. Residues K101 and K139 each carry the N6-acetyllysine modification. S140 carries the phosphoserine modification. K158 carries the N6-acetyllysine; alternate modification. K158 carries the post-translational modification N6-succinyllysine; alternate. K164 carries the post-translational modification N6-acetyllysine. K187 is modified (N6-succinyllysine). Residue K203 is modified to N6-acetyllysine; alternate. Position 203 is an N6-succinyllysine; alternate (K203). The segment at 205 to 333 is domain II; that stretch reads TKSDRPELTG…PEMTEILKKK (129 aa). K216 is subject to N6-succinyllysine. Residue R223 participates in FAD binding. 2 positions are modified to N6-acetyllysine; alternate: K226 and K232. K226 and K232 each carry N6-succinyllysine; alternate. FAD contacts are provided by residues S248, 263–266, 281–286, and N300; these read VGQT and SGAIQH. Residue K301 is modified to N6-succinyllysine. 318 to 319 contacts FAD; sequence DL.

Belongs to the ETF alpha-subunit/FixB family. Heterodimer composed of ETFA and ETFB. Identified in a complex that contains ETFA, ETFB and ETFRF1. Interaction with ETFRF1 promotes dissociation of the bound FAD and loss of electron transfer activity. Interacts with TASOR. The cofactor is FAD.

Its subcellular location is the mitochondrion matrix. Functionally, heterodimeric electron transfer flavoprotein that accepts electrons from several mitochondrial dehydrogenases, including acyl-CoA dehydrogenases, glutaryl-CoA and sarcosine dehydrogenase. It transfers the electrons to the main mitochondrial respiratory chain via ETF-ubiquinone oxidoreductase (ETF dehydrogenase). Required for normal mitochondrial fatty acid oxidation and normal amino acid metabolism. This Macaca fascicularis (Crab-eating macaque) protein is Electron transfer flavoprotein subunit alpha, mitochondrial (ETFA).